A 264-amino-acid polypeptide reads, in one-letter code: Thiazole synthase (264 aa).

The active-site Schiff-base intermediate with DXP is the Lys106. 1-deoxy-D-xylulose 5-phosphate contacts are provided by residues Gly167, 193-194 (AG), and 215-216 (NT).

It belongs to the ThiG family. In terms of assembly, homotetramer. Forms heterodimers with either ThiH or ThiS.

It localises to the cytoplasm. It catalyses the reaction [ThiS sulfur-carrier protein]-C-terminal-Gly-aminoethanethioate + 2-iminoacetate + 1-deoxy-D-xylulose 5-phosphate = [ThiS sulfur-carrier protein]-C-terminal Gly-Gly + 2-[(2R,5Z)-2-carboxy-4-methylthiazol-5(2H)-ylidene]ethyl phosphate + 2 H2O + H(+). The protein operates within cofactor biosynthesis; thiamine diphosphate biosynthesis. Catalyzes the rearrangement of 1-deoxy-D-xylulose 5-phosphate (DXP) to produce the thiazole phosphate moiety of thiamine. Sulfur is provided by the thiocarboxylate moiety of the carrier protein ThiS. In vitro, sulfur can be provided by H(2)S. The chain is Thiazole synthase from Stenotrophomonas maltophilia (strain R551-3).